The chain runs to 879 residues: Alanine--tRNA ligase (879 aa).

Zn(2+) is bound by residues His566, His570, Cys668, and His672.

The protein belongs to the class-II aminoacyl-tRNA synthetase family. Requires Zn(2+) as cofactor.

It localises to the cytoplasm. It catalyses the reaction tRNA(Ala) + L-alanine + ATP = L-alanyl-tRNA(Ala) + AMP + diphosphate. Catalyzes the attachment of alanine to tRNA(Ala) in a two-step reaction: alanine is first activated by ATP to form Ala-AMP and then transferred to the acceptor end of tRNA(Ala). Also edits incorrectly charged Ser-tRNA(Ala) and Gly-tRNA(Ala) via its editing domain. In Clostridium perfringens (strain 13 / Type A), this protein is Alanine--tRNA ligase.